We begin with the raw amino-acid sequence, 161 residues long: Allophycocyanin beta chain (161 aa).

N71 is modified (N4-methylasparagine). Residue C81 coordinates (2R,3E)-phycocyanobilin.

The protein belongs to the phycobiliprotein family. As to quaternary structure, heterodimer of an alpha and a beta chain. Contains one covalently linked phycocyanobilin chromophore.

The protein localises to the plastid. It localises to the chloroplast thylakoid membrane. Functionally, light-harvesting photosynthetic bile pigment-protein from the phycobiliprotein complex. Allophycocyanin has a maximum absorption at approximately 650 nanometers. The chain is Allophycocyanin beta chain (apcB) from Cyanidium caldarium (Red alga).